The sequence spans 183 residues: Capsid protein (183 aa).

The disordered stretch occupies residues 136–183 (NAPILSTLPETTVVRRRGRSPRRRTPSPRRRRSQSPRRRRSQSRESQC). Residues 149 to 176 (VRRRGRSPRRRTPSPRRRRSQSPRRRRS) are compositionally biased toward basic residues. Phosphoserine; by host is present on residues Ser-155, Ser-162, and Ser-170. Residues 155–161 (SPRRRTP) form a 1; half-length repeat. Positions 155–177 (SPRRRTPSPRRRRSQSPRRRRSQ) are 3 X 8 AA repeats of S-P-R-R-R-[PR]-S-Q. The Bipartite nuclear localization signal signature appears at 158-175 (RRTPSPRRRRSQSPRRRR). A run of 2 repeats spans residues 162 to 169 (SPRRRRSQ) and 170 to 177 (SPRRRRSQ). Residues 177-183 (QSRESQC) form an RNA binding region.

The protein belongs to the orthohepadnavirus core antigen family. In terms of assembly, homodimerizes, then multimerizes. Interacts with cytosol exposed regions of viral L glycoprotein present in the reticulum-to-Golgi compartment. Interacts with human FLNB. Phosphorylated form interacts with host importin alpha; this interaction depends on the exposure of the NLS, which itself depends upon genome maturation and/or phosphorylation of the capsid protein. Interacts with host NUP153. In terms of processing, phosphorylated by host SRPK1, SRPK2, and maybe protein kinase C or GAPDH. Phosphorylation is critical for pregenomic RNA packaging. Protein kinase C phosphorylation is stimulated by HBx protein and may play a role in transport of the viral genome to the nucleus at the late step during the viral replication cycle.

The protein resides in the virion. The protein localises to the host cytoplasm. Its function is as follows. Self assembles to form an icosahedral capsid. Most capsids appear to be large particles with an icosahedral symmetry of T=4 and consist of 240 copies of capsid protein, though a fraction forms smaller T=3 particles consisting of 180 capsid proteins. Entering capsids are transported along microtubules to the nucleus. Phosphorylation of the capsid is thought to induce exposure of nuclear localization signal in the C-terminal portion of the capsid protein that allows binding to the nuclear pore complex via the importin (karyopherin-) alpha and beta. Capsids are imported in intact form through the nuclear pore into the nuclear basket, where it probably binds NUP153. Only capsids that contain the mature viral genome can release the viral DNA and capsid protein into the nucleoplasm. Immature capsids get stuck in the basket. Capsids encapsulate the pre-genomic RNA and the P protein. Pre-genomic RNA is reverse-transcribed into DNA while the capsid is still in the cytoplasm. The capsid can then either be directed to the nucleus, providing more genomes for transcription, or bud through the endoplasmic reticulum to provide new virions. The protein is Capsid protein of Hepatitis B virus genotype B1 subtype adw (isolate Japan/pJDW233/1988) (HBV-B).